The chain runs to 149 residues: Calmodulin-6 (149 aa).

4 EF-hand domains span residues 8-43 (DQIS…LGQN), 44-79 (PTEA…KMKD), 81-116 (DSEE…LGEK), and 117-149 (LSDE…MMAK). Ca(2+) contacts are provided by Asp21, Asp23, Asp25, Cys27, Glu32, Asp57, Asp59, Asn61, Thr63, Glu68, Asp94, Asp96, Asn98, Glu105, Asp130, Asp132, Asp134, Gln136, and Glu141.

Belongs to the calmodulin family. Interacts with KCBP.

Calmodulin mediates the control of a large number of enzymes, ion channels and other proteins by Ca(2+). Among the enzymes to be stimulated by the calmodulin-Ca(2+) complex are a number of protein kinases and phosphatases. This chain is Calmodulin-6 (CAM6), found in Arabidopsis thaliana (Mouse-ear cress).